A 203-amino-acid chain; its full sequence is Putative 3-methyladenine DNA glycosylase (203 aa).

This sequence belongs to the DNA glycosylase MPG family.

This chain is Putative 3-methyladenine DNA glycosylase, found in Desulfitobacterium hafniense (strain Y51).